Here is a 688-residue protein sequence, read N- to C-terminus: Protein SDA1 homolog (688 aa).

Serine 232, serine 234, and serine 236 each carry phosphoserine. A coiled-coil region spans residues lysine 254 to methionine 318. A compositionally biased stretch (acidic residues) spans valine 484 to tryptophan 498. The segment at valine 484–glutamine 524 is disordered. The segment covering valine 514–glutamine 524 has biased composition (basic and acidic residues). A phosphoserine mark is found at serine 586 and serine 596. Residues lysine 605–lysine 688 form a disordered region. The span at serine 668–leucine 681 shows a compositional bias: basic and acidic residues.

The protein belongs to the SDA1 family.

It localises to the nucleus. It is found in the nucleolus. In terms of biological role, required for 60S pre-ribosomal subunits export to the cytoplasm. The chain is Protein SDA1 homolog (SDAD1) from Bos taurus (Bovine).